A 287-amino-acid polypeptide reads, in one-letter code: 4-hydroxybenzoate octaprenyltransferase (287 aa).

A run of 6 helical transmembrane segments spans residues 41 to 61 (LPLL…GCAI), 92 to 112 (VALA…LNAL), 133 to 153 (FFAI…PMAF), 160 to 180 (VPML…AYDT), 218 to 238 (LGIY…WLGW), and 267 to 287 (NNWL…ATWF).

This sequence belongs to the UbiA prenyltransferase family. The cofactor is Mg(2+).

It is found in the cell inner membrane. It catalyses the reaction all-trans-octaprenyl diphosphate + 4-hydroxybenzoate = 4-hydroxy-3-(all-trans-octaprenyl)benzoate + diphosphate. Its pathway is cofactor biosynthesis; ubiquinone biosynthesis. Its function is as follows. Catalyzes the prenylation of para-hydroxybenzoate (PHB) with an all-trans polyprenyl group. Mediates the second step in the final reaction sequence of ubiquinone-8 (UQ-8) biosynthesis, which is the condensation of the polyisoprenoid side chain with PHB, generating the first membrane-bound Q intermediate 3-octaprenyl-4-hydroxybenzoate. The polypeptide is 4-hydroxybenzoate octaprenyltransferase (Paraburkholderia xenovorans (strain LB400)).